The primary structure comprises 256 residues: Zinc import ATP-binding protein ZnuC (256 aa).

The region spanning 6–221 (IAAEGLSIRV…PEYRALFGTG (216 aa)) is the ABC transporter domain. 38-45 (GPNGSGKS) is a binding site for ATP. The segment at 237–256 (HDDDCGHDHGAEHMHPHGDR) is disordered.

This sequence belongs to the ABC transporter superfamily. Zinc importer (TC 3.A.1.15.5) family. In terms of assembly, the complex is composed of two ATP-binding proteins (ZnuC), two transmembrane proteins (ZnuB) and a solute-binding protein (ZnuA).

The protein resides in the cell inner membrane. It carries out the reaction Zn(2+)(out) + ATP(in) + H2O(in) = Zn(2+)(in) + ADP(in) + phosphate(in) + H(+)(in). In terms of biological role, part of the ABC transporter complex ZnuABC involved in zinc import. Responsible for energy coupling to the transport system. The protein is Zinc import ATP-binding protein ZnuC of Ruegeria pomeroyi (strain ATCC 700808 / DSM 15171 / DSS-3) (Silicibacter pomeroyi).